The sequence spans 297 residues: MEEPTAVEGQVQLPSPHQGSLRKAVAAALALDGESTMGHRKKKRKESRPESIIIYRSDNEKTDEEPGESEGGDQPKEEEGDDFLDYPVDDDMWNLPLDSRYVTLTGTITRGKKKGQMVDIHVTLTEKELQELTKPKESSRETTPEGRMACQMGADRGPHVVLWTLICLPVVFILSFVVSFYYGTITWYNIFLVYNEERTFWHKISYCPCLVLFYPVLIMAMASSLGLYAAVVQLSWSWEAWWQAARDMEKGFCGWLCSKLGLEDCSPYSIVELLESDNISSTLSNKDPIQEVETSTV.

Positions 1-85 (MEEPTAVEGQ…KEEEGDDFLD (85 aa)) are disordered. The Extracellular portion of the chain corresponds to 1 to 159 (MEEPTAVEGQ…CQMGADRGPH (159 aa)). A compositionally biased stretch (acidic residues) spans 61-85 (KTDEEPGESEGGDQPKEEEGDDFLD). A helical membrane pass occupies residues 160–180 (VVLWTLICLPVVFILSFVVSF). At 181 to 210 (YYGTITWYNIFLVYNEERTFWHKISYCPCL) the chain is on the cytoplasmic side. A helical membrane pass occupies residues 211–231 (VLFYPVLIMAMASSLGLYAAV). Over 232 to 297 (VQLSWSWEAW…PIQEVETSTV (66 aa)) the chain is Extracellular.

The protein resides in the membrane. This is Transmembrane protein 169 (TMEM169) from Homo sapiens (Human).